Here is a 287-residue protein sequence, read N- to C-terminus: Formamidopyrimidine-DNA glycosylase (287 aa).

Pro2 acts as the Schiff-base intermediate with DNA in catalysis. Catalysis depends on Glu3, which acts as the Proton donor. Catalysis depends on Lys61, which acts as the Proton donor; for beta-elimination activity. The DNA site is built by His95, Arg115, and Arg157. An FPG-type zinc finger spans residues 243-277 (NVYGRADQPCRRCGEPVRREAFMNRSSFSCPRCQP). Residue Arg267 is the Proton donor; for delta-elimination activity of the active site.

Belongs to the FPG family. As to quaternary structure, monomer. The cofactor is Zn(2+).

The catalysed reaction is Hydrolysis of DNA containing ring-opened 7-methylguanine residues, releasing 2,6-diamino-4-hydroxy-5-(N-methyl)formamidopyrimidine.. It catalyses the reaction 2'-deoxyribonucleotide-(2'-deoxyribose 5'-phosphate)-2'-deoxyribonucleotide-DNA = a 3'-end 2'-deoxyribonucleotide-(2,3-dehydro-2,3-deoxyribose 5'-phosphate)-DNA + a 5'-end 5'-phospho-2'-deoxyribonucleoside-DNA + H(+). Functionally, involved in base excision repair of DNA damaged by oxidation or by mutagenic agents. Acts as a DNA glycosylase that recognizes and removes damaged bases. Has a preference for oxidized purines, such as 7,8-dihydro-8-oxoguanine (8-oxoG). Has AP (apurinic/apyrimidinic) lyase activity and introduces nicks in the DNA strand. Cleaves the DNA backbone by beta-delta elimination to generate a single-strand break at the site of the removed base with both 3'- and 5'-phosphates. The polypeptide is Formamidopyrimidine-DNA glycosylase (Salinispora tropica (strain ATCC BAA-916 / DSM 44818 / JCM 13857 / NBRC 105044 / CNB-440)).